A 425-amino-acid chain; its full sequence is Aspartic protease 2 (425 aa).

The first 16 residues, 1 to 16 (MRSILVLVALIGCIAA), serve as a signal peptide directing secretion. One can recognise a Peptidase A1 domain in the interval 72-421 (YLGEITIGTP…DIEKKRIGFA (350 aa)). The active site involves Asp-90. Cys-103 and Cys-145 are disulfide-bonded. 3 N-linked (GlcNAc...) asparagine glycosylation sites follow: Asn-163, Asn-197, and Asn-304. Residue Asp-316 is part of the active site. A disulfide bridge links Cys-351 with Cys-382. Residues Asn-354 and Asn-365 are each glycosylated (N-linked (GlcNAc...) asparagine).

The protein belongs to the peptidase A1 family. Cleaved into a mature form. In terms of tissue distribution, expressed in intestine, amphidal glands and excretory gland (at protein level).

The protein localises to the secreted. With respect to regulation, inhibited by pepstatin A. In terms of biological role, aspartic protease which cleaves several human serum proteins including hemoglobin, fibrinogen and albumin. Appears to cleave preferentially between P1 (Ala, Leu, Val, Phe and Gly) and P1' (Ala and Leu) residues. In Necator americanus (Human hookworm), this protein is Aspartic protease 2.